Consider the following 94-residue polypeptide: DNA-directed RNA polymerase subunit Rpo11 (94 aa).

It belongs to the archaeal Rpo11/eukaryotic RPB11/RPC19 RNA polymerase subunit family. Part of the RNA polymerase complex.

The protein resides in the cytoplasm. The enzyme catalyses RNA(n) + a ribonucleoside 5'-triphosphate = RNA(n+1) + diphosphate. In terms of biological role, DNA-dependent RNA polymerase (RNAP) catalyzes the transcription of DNA into RNA using the four ribonucleoside triphosphates as substrates. This Halobacterium salinarum (strain ATCC 700922 / JCM 11081 / NRC-1) (Halobacterium halobium) protein is DNA-directed RNA polymerase subunit Rpo11.